Reading from the N-terminus, the 314-residue chain is Serine/threonine-protein phosphatase CPPED1 (314 aa).

The residue at position 2 (Ser2) is a Phosphoserine. The tract at residues 47 to 250 is catalytic; that stretch reads KAWSTGDCDN…KVVFSGHYHR (204 aa). Positions 53, 90, 127, and 247 each coordinate a divalent metal cation. Ser294 carries the phosphoserine modification.

This sequence belongs to the metallophosphoesterase superfamily. CPPED1 family. It depends on a divalent metal cation as a cofactor.

The protein localises to the cytoplasm. It carries out the reaction O-phospho-L-seryl-[protein] + H2O = L-seryl-[protein] + phosphate. The enzyme catalyses O-phospho-L-threonyl-[protein] + H2O = L-threonyl-[protein] + phosphate. In terms of biological role, protein phosphatase that dephosphorylates AKT family kinase specifically at 'Ser-473', blocking cell cycle progression and promoting cell apoptosis. May play an inhibitory role in glucose uptake by adipocytes. This chain is Serine/threonine-protein phosphatase CPPED1 (CPPED1), found in Pongo abelii (Sumatran orangutan).